We begin with the raw amino-acid sequence, 281 residues long: NADPH-dependent 7-cyano-7-deazaguanine reductase (281 aa).

89–91 contributes to the substrate binding site; the sequence is VES. 91 to 92 contacts NADPH; that stretch reads SK. The active-site Thioimide intermediate is Cys188. Residue Asp195 is the Proton donor of the active site. Residue 227-228 participates in substrate binding; the sequence is HE. 256 to 257 is an NADPH binding site; the sequence is RG.

It belongs to the GTP cyclohydrolase I family. QueF type 2 subfamily. In terms of assembly, homodimer.

The protein resides in the cytoplasm. The enzyme catalyses 7-aminomethyl-7-carbaguanine + 2 NADP(+) = 7-cyano-7-deazaguanine + 2 NADPH + 3 H(+). Its pathway is tRNA modification; tRNA-queuosine biosynthesis. Its function is as follows. Catalyzes the NADPH-dependent reduction of 7-cyano-7-deazaguanine (preQ0) to 7-aminomethyl-7-deazaguanine (preQ1). The chain is NADPH-dependent 7-cyano-7-deazaguanine reductase from Azoarcus sp. (strain BH72).